Consider the following 207-residue polypeptide: Thymidylate kinase (207 aa).

An ATP-binding site is contributed by Gly7–Ser14.

Belongs to the thymidylate kinase family.

It carries out the reaction dTMP + ATP = dTDP + ADP. Its function is as follows. Phosphorylation of dTMP to form dTDP in both de novo and salvage pathways of dTTP synthesis. The protein is Thymidylate kinase of Chlamydia felis (strain Fe/C-56) (Chlamydophila felis).